Consider the following 297-residue polypeptide: Cytidine deaminase (297 aa).

CMP/dCMP-type deaminase domains are found at residues 50-170 and 189-297; these read SDKE…FGPK and ETES…YASL. 91–93 contacts substrate; that stretch reads NME. Histidine 104 lines the Zn(2+) pocket. Catalysis depends on glutamate 106, which acts as the Proton donor. Zn(2+) is bound by residues cysteine 131 and cysteine 134.

Belongs to the cytidine and deoxycytidylate deaminase family. In terms of assembly, homodimer. The cofactor is Zn(2+).

It carries out the reaction cytidine + H2O + H(+) = uridine + NH4(+). It catalyses the reaction 2'-deoxycytidine + H2O + H(+) = 2'-deoxyuridine + NH4(+). This enzyme scavenges exogenous and endogenous cytidine and 2'-deoxycytidine for UMP synthesis. This Aliivibrio fischeri (strain ATCC 700601 / ES114) (Vibrio fischeri) protein is Cytidine deaminase.